The sequence spans 39 residues: Photosystem II reaction center protein L (39 aa).

A helical membrane pass occupies residues serine 18–phenylalanine 38.

The protein belongs to the PsbL family. As to quaternary structure, PSII is composed of 1 copy each of membrane proteins PsbA, PsbB, PsbC, PsbD, PsbE, PsbF, PsbH, PsbI, PsbJ, PsbK, PsbL, PsbM, PsbT, PsbX, PsbY, Psb30/Ycf12, peripheral proteins PsbO, CyanoQ (PsbQ), PsbU, PsbV and a large number of cofactors. It forms dimeric complexes.

The protein localises to the cellular thylakoid membrane. In terms of biological role, one of the components of the core complex of photosystem II (PSII). PSII is a light-driven water:plastoquinone oxidoreductase that uses light energy to abstract electrons from H(2)O, generating O(2) and a proton gradient subsequently used for ATP formation. It consists of a core antenna complex that captures photons, and an electron transfer chain that converts photonic excitation into a charge separation. This subunit is found at the monomer-monomer interface and is required for correct PSII assembly and/or dimerization. This is Photosystem II reaction center protein L from Prochlorococcus marinus (strain MIT 9211).